The primary structure comprises 68 residues: Large ribosomal subunit protein bL32 (68 aa).

Positions Met-1–Ser-21 are disordered.

Belongs to the bacterial ribosomal protein bL32 family.

The protein is Large ribosomal subunit protein bL32 of Roseobacter denitrificans (strain ATCC 33942 / OCh 114) (Erythrobacter sp. (strain OCh 114)).